Consider the following 506-residue polypeptide: Glutamate--tRNA ligase (506 aa).

The short motif at 12–22 (PSPTGDPHVGT) is the 'HIGH' region element. The short motif at 253 to 257 (KLSKR) is the 'KMSKS' region element. An ATP-binding site is contributed by K256.

It belongs to the class-I aminoacyl-tRNA synthetase family. Glutamate--tRNA ligase type 1 subfamily. In terms of assembly, monomer.

The protein localises to the cytoplasm. It carries out the reaction tRNA(Glu) + L-glutamate + ATP = L-glutamyl-tRNA(Glu) + AMP + diphosphate. Its function is as follows. Catalyzes the attachment of glutamate to tRNA(Glu) in a two-step reaction: glutamate is first activated by ATP to form Glu-AMP and then transferred to the acceptor end of tRNA(Glu). This is Glutamate--tRNA ligase from Chlamydia muridarum (strain MoPn / Nigg).